We begin with the raw amino-acid sequence, 448 residues long: Vimentin (448 aa).

The interval 1 to 77 (PRHLEPAGSN…FSLADAINTE (77 aa)) is head. The residue at position 9 (S9) is a Phosphoserine. O-linked (GlcNAc) threonine glycosylation occurs at T16. A Phosphoserine; by PKC; alternate modification is found at S17. O-linked (GlcNAc) serine; alternate glycosylation occurs at S17. Residue S22 is modified to Phosphoserine; by CaMK2, PKA, PKC and ROCK2. Residues S29, S31, and S33 each carry the phosphoserine modification. Residue Y35 is modified to Phosphotyrosine. S37 is subject to Phosphoserine. Phosphoserine; by CDK5 and CDK1 is present on S38. Residue Y43 is modified to Phosphotyrosine. At S48 the chain carries Phosphoserine; by PKA and PKC. S54 carries the post-translational modification Phosphoserine; by AURKB and ROCK2. S55 carries the phosphoserine modification. S65 is subject to Phosphoserine; by CaMK2. S69 carries the post-translational modification Phosphoserine. Positions 78–113 (FKNTRTNEKVELQELNDRFADYIDKVRFLEQQNKIL) are coil 1A. Positions 78 to 113 (FKNTRTNEKVELQELNDRFADYIDKVRFLEQQNKIL) form a coiled coil. In terms of domain architecture, IF rod spans 85 to 393 (EKVELQELND…KLLEGEESRI (309 aa)). K86 participates in a covalent cross-link: Glycyl lysine isopeptide (Lys-Gly) (interchain with G-Cter in SUMO2). Phosphotyrosine is present on Y99. An N6-acetyllysine; alternate mark is found at K102, K111, and K121. N6-succinyllysine; alternate is present on residues K102 and K111. Glycyl lysine isopeptide (Lys-Gly) (interchain with G-Cter in SUMO2); alternate cross-links involve residues K102, K111, and K121. Residues 114 to 135 (LAELEQLKGQGKSRLGDLYEEE) form a linker 1 region. S126 is subject to Phosphoserine. A coiled-coil region spans residues 136–227 (MRELRRQVDQ…KLHDEEIQEL (92 aa)). Positions 136 to 227 (MRELRRQVDQ…KLHDEEIQEL (92 aa)) are coil 1B. The residue at position 150 (K150) is an N6-acetyllysine. An N6-acetyllysine; alternate modification is found at K170. The residue at position 170 (K170) is an N6-succinyllysine; alternate. S196 bears the Phosphoserine mark. N6-acetyllysine; alternate is present on K205. Residue K205 forms a Glycyl lysine isopeptide (Lys-Gly) (interchain with G-Cter in SUMO2); alternate linkage. Residue S208 is modified to Phosphoserine. An N6-acetyllysine modification is found at K217. Residues 228 to 250 (QAQIQEQHVQIDVDVSKPDLTAA) form a linker 12 region. Residue K244 forms a Glycyl lysine isopeptide (Lys-Gly) (interchain with G-Cter in SUMO2) linkage. Residues 251–389 (LRDVRQQYES…ATYRKLLEGE (139 aa)) are coil 2. At K276 the chain carries N6-acetyllysine; alternate. K276 bears the N6-succinyllysine; alternate mark. Residue K276 forms a Glycyl lysine isopeptide (Lys-Gly) (interchain with G-Cter in SUMO2); alternate linkage. S281 is modified (phosphoserine). Residues 285–389 (NRNNDALRQA…ATYRKLLEGE (105 aa)) adopt a coiled-coil conformation. K295 participates in a covalent cross-link: Glycyl lysine isopeptide (Lys-Gly) (interchain with G-Cter in SUMO2). Residue S307 is modified to Phosphoserine. The [IL]-x-C-x-x-[DE] motif motif lies at 308–311 (LTCE). Position 355 is an N6-acetyllysine; alternate (K355). K355 is covalently cross-linked (Glycyl lysine isopeptide (Lys-Gly) (interchain with G-Cter in SUMO2); alternate). The interval 390-448 (ESRISLPLPNFSSLNLRETNLESLPLVDTHSKRTLLIKTVETRDGQVINETSQHHDDLE) is tail. 4 positions are modified to phosphoserine: S391, S394, S401, and S402. T408 carries the post-translational modification Phosphothreonine. S412 bears the Phosphoserine mark. A Phosphothreonine modification is found at T418. S420 carries the phosphoserine modification. K421 is covalently cross-linked (Glycyl lysine isopeptide (Lys-Gly) (interchain with G-Cter in SUMO2)). At K427 the chain carries N6-acetyllysine; alternate. Position 427 is an N6-succinyllysine; alternate (K427). A Glycyl lysine isopeptide (Lys-Gly) (interchain with G-Cter in SUMO2); alternate cross-link involves residue K427. K427 participates in a covalent cross-link: Glycyl lysine isopeptide (Lys-Gly) (interchain with G-Cter in SUMO1); alternate. Phosphothreonine is present on residues T428 and T440. A Phosphoserine modification is found at S441.

Belongs to the intermediate filament family. As to quaternary structure, homomer assembled from elementary dimers. Identified in complexes that contain VIM, EZR, AHNAK, BFSP1, BFSP2, ANK2, PLEC, PRX and spectrin. Interacts with BCAS3. Interacts with LGSN. Interacts with SYNM. Interacts (via rod region) with PLEC (via CH 1 domain). Interacts with STK33. Interacts with LARP6. Interacts with RAB8B. Interacts with TOR1A; the interaction associates TOR1A with the cytoskeleton. Interacts with TOR1AIP1. Interacts with TOR1AIP1. Interacts with DIAPH1. Interacts with EPPK1; interaction is dependent of higher-order structure of intermediate filament. Interacts with the non-receptor tyrosine kinase SRMS; the interaction leads to phosphorylation of VIM. Interacts with NOD2. Interacts (via head region) with CORO1C. Interacts with HDGF. Interacts with PRKCE (via phorbol-ester/DAG-type 2 domain). Interacts with BFSP2. Interacts with PPL. Interacts with PKP1 and PKP2. Interacts with SCRIB (via PDZ domains); the interaction protects SCRIB from proteasomal degradation and facilitates SCRIB localization to intermediate filaments, the interaction is reduced by cell contact inhibition. One of the most prominent phosphoproteins in various cells of mesenchymal origin. Phosphorylation is enhanced during cell division, at which time vimentin filaments are significantly reorganized. Phosphorylation by PKN1 inhibits the formation of filaments. Filament disassembly during mitosis is promoted by phosphorylation at Ser-37 as well as by nestin. Phosphorylated at Ser-38 by CDK5 during neutrophil secretion in the cytoplasm. Phosphorylated by STK33. Phosphorylated on tyrosine residues by SRMS. In terms of processing, S-nitrosylation is induced by interferon-gamma and oxidatively-modified low-densitity lipoprotein (LDL(ox)) possibly implicating the iNOS-S100A8/9 transnitrosylase complex.

The protein resides in the cytoplasm. Its subcellular location is the cytoskeleton. It localises to the nucleus matrix. It is found in the cell membrane. Vimentins are class-III intermediate filaments found in various non-epithelial cells, especially mesenchymal cells. Vimentin is attached to the nucleus, endoplasmic reticulum, and mitochondria, either laterally or terminally. Plays a role in cell directional movement, orientation, cell sheet organization and Golgi complex polarization at the cell migration front. Protects SCRIB from proteasomal degradation and facilitates its localization to intermediate filaments in a cell contact-mediated manner. Functionally, involved with LARP6 in the stabilization of type I collagen mRNAs for CO1A1 and CO1A2. This Cricetulus griseus (Chinese hamster) protein is Vimentin (VIM).